Consider the following 146-residue polypeptide: Ecotin-like protein 1 (146 aa).

This sequence belongs to the protease inhibitor I11 (ecotin) family.

The sequence is that of Ecotin-like protein 1 (ISP1) from Leishmania braziliensis.